The primary structure comprises 195 residues: Shikimate kinase (195 aa).

Position 31-36 (31-36 (GAGKSC)) interacts with ATP. Position 35 (S35) interacts with Mg(2+). The substrate site is built by D53, R77, and G99. R137 is an ATP binding site. R156 contributes to the substrate binding site.

The protein belongs to the shikimate kinase family. As to quaternary structure, monomer. It depends on Mg(2+) as a cofactor.

It localises to the cytoplasm. The enzyme catalyses shikimate + ATP = 3-phosphoshikimate + ADP + H(+). Its pathway is metabolic intermediate biosynthesis; chorismate biosynthesis; chorismate from D-erythrose 4-phosphate and phosphoenolpyruvate: step 5/7. Its function is as follows. Catalyzes the specific phosphorylation of the 3-hydroxyl group of shikimic acid using ATP as a cosubstrate. In Paramagnetospirillum magneticum (strain ATCC 700264 / AMB-1) (Magnetospirillum magneticum), this protein is Shikimate kinase.